We begin with the raw amino-acid sequence, 173 residues long: Small ribosomal subunit protein uS5 (173 aa).

The S5 DRBM domain occupies L18 to V81.

This sequence belongs to the universal ribosomal protein uS5 family. Part of the 30S ribosomal subunit. Contacts proteins S4 and S8.

With S4 and S12 plays an important role in translational accuracy. Its function is as follows. Located at the back of the 30S subunit body where it stabilizes the conformation of the head with respect to the body. In Bordetella avium (strain 197N), this protein is Small ribosomal subunit protein uS5.